The following is a 347-amino-acid chain: MSLLCRNKGCGQHFDPNTNLPDSCCHHPGVPIFHDALKGWSCCRKRTVDFSEFLNIKGCTMGPHCAEKLPEAPQPEGPATSSSLQEQKPLNVIPKSAETLRRERPKSELPLKLLPLNISQALEMALEQKELDQEPGAGLDSLIRTGSSCQNPGCDAVYQGPESDATPCTYHPGAPRFHEGMKSWSCCGIQTLDFGAFLAQPGCRVGRHDWGKQLPASCRHDWHQTDSLVVVTVYGQIPLPAFNWVKASQTELHVHIVFDGNRVFQAQMKLWGVINVEQSSVFLMPSRVEISLVKADPGSWAQLEHPDALAKKARAGVVLEMDEEESDDSDDDLSWTEEEEEEEAMGE.

Zn(2+) contacts are provided by cysteine 5, cysteine 10, cysteine 24, and histidine 27. Residues 5 to 64 (CRNKGCGQHFDPNTNLPDSCCHHPGVPIFHDALKGWSCCRKRTVDFSEFLNIKGCTMGPH) form the CHORD 1 domain. The SH3-binding signature appears at 28 to 31 (PGVP). Zn(2+)-binding residues include cysteine 42, cysteine 43, cysteine 59, and histidine 64. An SH3-binding motif is present at residues 70-78 (PEAPQPEGP). Cysteine 149 and cysteine 154 together coordinate Zn(2+). In terms of domain architecture, CHORD 2 spans 149 to 208 (CQNPGCDAVYQGPESDATPCTYHPGAPRFHEGMKSWSCCGIQTLDFGAFLAQPGCRVGRH). The SH2-binding signature appears at 158–161 (YQGP). Zn(2+)-binding residues include cysteine 168 and histidine 171. Positions 172–175 (PGAP) match the SH3-binding motif. Zn(2+) contacts are provided by cysteine 186, cysteine 187, cysteine 203, and histidine 208. The CS domain occupies 215–304 (PASCRHDWHQ…ADPGSWAQLE (90 aa)). The SH2-binding signature appears at 234 to 237 (YGQI). A disordered region spans residues 319 to 347 (LEMDEEESDDSDDDLSWTEEEEEEEAMGE). The span at 320–347 (EMDEEESDDSDDDLSWTEEEEEEEAMGE) shows a compositional bias: acidic residues.

Interacts with beta-1 integrin subunit. This interaction is regulated by divalent cations, and it occurs only in absence of calcium. As to expression, expressed in skeletal and cardiac muscles but not in other tissues.

In terms of biological role, may play a role during maturation and/or organization of muscles cells. The polypeptide is Integrin beta-1-binding protein 2 (ITGB1BP2) (Homo sapiens (Human)).